Consider the following 475-residue polypeptide: UDP-N-acetylmuramate--L-alanine ligase (475 aa).

Residue 125-131 (GTHGKTT) participates in ATP binding.

The protein belongs to the MurCDEF family.

It is found in the cytoplasm. It catalyses the reaction UDP-N-acetyl-alpha-D-muramate + L-alanine + ATP = UDP-N-acetyl-alpha-D-muramoyl-L-alanine + ADP + phosphate + H(+). It participates in cell wall biogenesis; peptidoglycan biosynthesis. In terms of biological role, cell wall formation. The sequence is that of UDP-N-acetylmuramate--L-alanine ligase from Actinobacillus pleuropneumoniae serotype 5b (strain L20).